Reading from the N-terminus, the 213-residue chain is Amelotin (213 aa).

A signal peptide spans 1-16 (MKTMILLLCLLGSAQS). Disordered regions lie at residues 22–43 (NPAS…LPQQ) and 162–213 (GAKA…NRTQ). Positions 33 to 43 (TPGQVTPLPQQ) are enriched in polar residues. The segment covering 169–180 (GTTPGHVTTPGV) has biased composition (low complexity).

It belongs to the amelotin family. Post-translationally, phosphorylated by FAM20C in vitro. O-glycosylated. In terms of tissue distribution, specifically expressed in maturation-stage ameloblasts.

It localises to the secreted. In terms of biological role, is a promoter of calcium phosphate mineralization, playing a critical role in the formation of the compact, mineralized, aprismatic enamel surface layer during the maturation stage of amelogenesis. This is Amelotin (Amtn) from Mus musculus (Mouse).